We begin with the raw amino-acid sequence, 259 residues long: Polycomb group RING finger protein 1 (259 aa).

Alanine 2 bears the N-acetylalanine mark. The residue at position 3 (serine 3) is a Phosphoserine. Lysine 24 participates in a covalent cross-link: Glycyl lysine isopeptide (Lys-Gly) (interchain with G-Cter in SUMO2). The segment at cysteine 47–asparagine 86 adopts an RING-type zinc-finger fold. A required for repressor activity region spans residues asparagine 86–proline 247. Residue lysine 88 forms a Glycyl lysine isopeptide (Lys-Gly) (interchain with G-Cter in SUMO2) linkage. The segment at leucine 150 to lysine 255 is required for the interaction with the KDM2B-SKP1 heterodimeric complex. An RING-finger and WD40-associated ubiquitin-like domain (RAWUL); sufficient for interaction with BCOR and BCORL1 region spans residues glutamate 167–lysine 255.

In terms of assembly, interacts with BCORL1, forming heterodimers. The PCGF1-BCORL1 heterodimeric complex interacts with the KDM2B-SKP1 heterodimeric complex to form a homotetrameric polycomb repression complex 1 (PRC1.1). Component of the repressive BCOR complex containing a Polycomb group subcomplex at least composed of RYBP, RING1 and RNF2/RING2. Specifically interacts with BCOR, RING1 and RNF2/RING2. Component of a PRC1-like complex. Interacts with CBX6, CBX7 and CBX8. Interacts with DPPA4, NANOG, POU5F1 and RYBP. Ubiquitous.

The protein resides in the nucleus. Its function is as follows. Component of the Polycomb group (PcG) multiprotein BCOR complex, a complex required to maintain the transcriptionally repressive state of some genes, such as BCL6 and the cyclin-dependent kinase inhibitor, CDKN1A. Transcriptional repressor that may be targeted to the DNA by BCL6; this transcription repressor activity may be related to PKC signaling pathway. Represses CDKN1A expression by binding to its promoter, and this repression is dependent on the retinoic acid response element (RARE element). Promotes cell cycle progression and enhances cell proliferation as well. May have a positive role in tumor cell growth by down-regulating CDKN1A. Component of a Polycomb group (PcG) multiprotein PRC1-like complex, a complex class required to maintain the transcriptionally repressive state of many genes, including Hox genes, throughout development. PcG PRC1 complex acts via chromatin remodeling and modification of histones; it mediates monoubiquitination of histone H2A 'Lys-119', rendering chromatin heritably changed in its expressibility. Within the PRC1-like complex, regulates RNF2 ubiquitin ligase activity. Regulates the expression of DPPA4 and NANOG in the NT2 embryonic carcinoma cells. In Homo sapiens (Human), this protein is Polycomb group RING finger protein 1 (PCGF1).